The primary structure comprises 1099 residues: Contactin-5 (1099 aa).

An N-terminal signal peptide occupies residues 1–18 (MASSWRLILFLSFTSCLS). Ig-like C2-type domains are found at residues 99–190 (PVFV…ATLQ), 196–282 (NFSG…RVLS), 300–385 (PKIE…GQLQ), 390–474 (PHWV…AELK), 480–569 (PSFE…VSVK), and 571–660 (PTRI…DSVS). Cys-123 and Cys-173 are disulfide-bonded. N-linked (GlcNAc...) asparagine glycosylation is found at Asn-138 and Asn-196. Disulfide bonds link Cys-217-Cys-269 and Cys-322-Cys-369. N-linked (GlcNAc...) asparagine glycosylation is found at Asn-397, Asn-449, and Asn-540. 3 disulfides stabilise this stretch: Cys-411–Cys-458, Cys-503–Cys-551, and Cys-593–Cys-650. 4 Fibronectin type-III domains span residues 673–771 (PPGV…TNEA), 776–873 (APSN…SAEG), 878–972 (APTD…TKRH), and 977–1067 (PPGN…SYAG). Asn-779, Asn-816, and Asn-931 each carry an N-linked (GlcNAc...) asparagine glycan. A disordered region spans residues 958 to 983 (YGPPSREVSATTKRHPPSEPPGNLRW). An N-linked (GlcNAc...) asparagine glycan is attached at Asn-1002. Residue Ser-1072 is the site of GPI-anchor amidated serine attachment. Residues 1073 to 1099 (AQSTLHSLSKWSSVTLLLALMLPSSSW) constitute a propeptide, removed in mature form.

It belongs to the immunoglobulin superfamily. Contactin family. As to quaternary structure, interacts with PTPRG. In terms of tissue distribution, specifically expressed in the nervous system. Expressed in cerebrum and cerebellum but at low level in spinal cord. In brain, it is expressed in highly restricted regions at postnatal day 7, such as the auditory pathway, including the cochlear nucleus, superior olive, inferior colliculus, medial geniculate nucleus and auditory cortex. Expressed in the accessory olfactory bulb, glomerular and mitral cell layers in the olfactory bulb, anterior thalamic nuclei, layers II-IV of the cerebral cortex, dentate gyrus of the hippocampus and external granule cells and Purkinje cells of the cerebellum. Also expressed in the piriform cortex, inferior olive and facial nucleus. Weakly or not expressed in other parts of the brain.

It is found in the cell membrane. Contactins mediate cell surface interactions during nervous system development. Has some neurite outgrowth-promoting activity in the cerebral cortical neurons but not in hippocampal neurons. Probably involved in neuronal activity in the auditory system. The sequence is that of Contactin-5 (Cntn5) from Rattus norvegicus (Rat).